The chain runs to 241 residues: Aspartate/glutamate leucyltransferase (241 aa).

It belongs to the R-transferase family. Bpt subfamily.

The protein localises to the cytoplasm. It catalyses the reaction N-terminal L-glutamyl-[protein] + L-leucyl-tRNA(Leu) = N-terminal L-leucyl-L-glutamyl-[protein] + tRNA(Leu) + H(+). It carries out the reaction N-terminal L-aspartyl-[protein] + L-leucyl-tRNA(Leu) = N-terminal L-leucyl-L-aspartyl-[protein] + tRNA(Leu) + H(+). Its function is as follows. Functions in the N-end rule pathway of protein degradation where it conjugates Leu from its aminoacyl-tRNA to the N-termini of proteins containing an N-terminal aspartate or glutamate. In Parvibaculum lavamentivorans (strain DS-1 / DSM 13023 / NCIMB 13966), this protein is Aspartate/glutamate leucyltransferase.